The chain runs to 315 residues: DNA-directed RNA polymerase subunit alpha (315 aa).

Residues 1–228 are alpha N-terminal domain (alpha-NTD); the sequence is MLEIEKPKIE…EHFKLFMTLT (228 aa). The segment at 245–315 is alpha C-terminal domain (alpha-CTD); it reads KEKVLEMTIE…LGLSLKLNDE (71 aa).

Belongs to the RNA polymerase alpha chain family. As to quaternary structure, homodimer. The RNAP catalytic core consists of 2 alpha, 1 beta, 1 beta' and 1 omega subunit. When a sigma factor is associated with the core the holoenzyme is formed, which can initiate transcription.

It catalyses the reaction RNA(n) + a ribonucleoside 5'-triphosphate = RNA(n+1) + diphosphate. Its function is as follows. DNA-dependent RNA polymerase catalyzes the transcription of DNA into RNA using the four ribonucleoside triphosphates as substrates. This Clostridium acetobutylicum (strain ATCC 824 / DSM 792 / JCM 1419 / IAM 19013 / LMG 5710 / NBRC 13948 / NRRL B-527 / VKM B-1787 / 2291 / W) protein is DNA-directed RNA polymerase subunit alpha.